The primary structure comprises 732 residues: Polyribonucleotide nucleotidyltransferase (732 aa).

Mg(2+) is bound by residues Asp516 and Asp522. In terms of domain architecture, KH spans 582 to 642 (PSSHTITVHP…PKVIAACDYI (61 aa)). Positions 659 to 726 (GDILKGKIKR…KGHKIELGLR (68 aa)) constitute an S1 motif domain.

It belongs to the polyribonucleotide nucleotidyltransferase family. It depends on Mg(2+) as a cofactor.

The protein resides in the cytoplasm. It catalyses the reaction RNA(n+1) + phosphate = RNA(n) + a ribonucleoside 5'-diphosphate. In terms of biological role, involved in mRNA degradation. Catalyzes the phosphorolysis of single-stranded polyribonucleotides processively in the 3'- to 5'-direction. In Nitratiruptor sp. (strain SB155-2), this protein is Polyribonucleotide nucleotidyltransferase.